A 429-amino-acid chain; its full sequence is Enolase (429 aa).

Gln-163 contacts (2R)-2-phosphoglycerate. Glu-205 (proton donor) is an active-site residue. Mg(2+) contacts are provided by Asp-242, Glu-286, and Asp-313. Residues Lys-338, Arg-367, Ser-368, and Lys-389 each coordinate (2R)-2-phosphoglycerate. The active-site Proton acceptor is the Lys-338.

Belongs to the enolase family. Mg(2+) is required as a cofactor.

It localises to the cytoplasm. Its subcellular location is the secreted. It is found in the cell surface. The enzyme catalyses (2R)-2-phosphoglycerate = phosphoenolpyruvate + H2O. The protein operates within carbohydrate degradation; glycolysis; pyruvate from D-glyceraldehyde 3-phosphate: step 4/5. In terms of biological role, catalyzes the reversible conversion of 2-phosphoglycerate (2-PG) into phosphoenolpyruvate (PEP). It is essential for the degradation of carbohydrates via glycolysis. In Thermoanaerobacter sp. (strain X514), this protein is Enolase.